The sequence spans 1076 residues: Carbamoyl phosphate synthase large chain (1076 aa).

A carboxyphosphate synthetic domain region spans residues Met1–Glu402. Residues Arg129, Arg169, Gly175, Gly176, Glu208, Val210, Glu215, Gly241, Val242, His243, Gln285, and Glu299 each contribute to the ATP site. Positions Lys133–Val328 constitute an ATP-grasp 1 domain. Mg(2+) is bound by residues Gln285, Glu299, and Asn301. The Mn(2+) site is built by Gln285, Glu299, and Asn301. Positions Ile403 to Ala555 are oligomerization domain. Positions Leu556–Lys939 are carbamoyl phosphate synthetic domain. Residues Ala680–Met871 enclose the ATP-grasp 2 domain. ATP contacts are provided by Arg716, Lys755, Leu757, Glu762, Gly787, Val788, His789, Ser790, Gln830, and Glu842. Mg(2+) contacts are provided by Gln830, Glu842, and Asn844. Residues Gln830, Glu842, and Asn844 each contribute to the Mn(2+) site. The MGS-like domain maps to Met938–Ser1076. An allosteric domain region spans residues Leu940 to Ser1076.

This sequence belongs to the CarB family. As to quaternary structure, composed of two chains; the small (or glutamine) chain promotes the hydrolysis of glutamine to ammonia, which is used by the large (or ammonia) chain to synthesize carbamoyl phosphate. Tetramer of heterodimers (alpha,beta)4. The cofactor is Mg(2+). It depends on Mn(2+) as a cofactor.

The catalysed reaction is hydrogencarbonate + L-glutamine + 2 ATP + H2O = carbamoyl phosphate + L-glutamate + 2 ADP + phosphate + 2 H(+). The enzyme catalyses hydrogencarbonate + NH4(+) + 2 ATP = carbamoyl phosphate + 2 ADP + phosphate + 2 H(+). It functions in the pathway amino-acid biosynthesis; L-arginine biosynthesis; carbamoyl phosphate from bicarbonate: step 1/1. The protein operates within pyrimidine metabolism; UMP biosynthesis via de novo pathway; (S)-dihydroorotate from bicarbonate: step 1/3. Large subunit of the glutamine-dependent carbamoyl phosphate synthetase (CPSase). CPSase catalyzes the formation of carbamoyl phosphate from the ammonia moiety of glutamine, carbonate, and phosphate donated by ATP, constituting the first step of 2 biosynthetic pathways, one leading to arginine and/or urea and the other to pyrimidine nucleotides. The large subunit (synthetase) binds the substrates ammonia (free or transferred from glutamine from the small subunit), hydrogencarbonate and ATP and carries out an ATP-coupled ligase reaction, activating hydrogencarbonate by forming carboxy phosphate which reacts with ammonia to form carbamoyl phosphate. The sequence is that of Carbamoyl phosphate synthase large chain from Archaeoglobus fulgidus (strain ATCC 49558 / DSM 4304 / JCM 9628 / NBRC 100126 / VC-16).